A 113-amino-acid chain; its full sequence is MNKLRKLKRDTDHRQALMRNLATSLFKHGRIMTTEAKAKDLRRIAEKLITIAKKGDLASYRRVLGYLYEEDVAYDLFQKIAPRYQGRNGGYTRIIKVGPRKGDGAMMVYIELV.

This sequence belongs to the bacterial ribosomal protein bL17 family. As to quaternary structure, part of the 50S ribosomal subunit. Contacts protein L32.

The polypeptide is Large ribosomal subunit protein bL17 (Caldicellulosiruptor bescii (strain ATCC BAA-1888 / DSM 6725 / KCTC 15123 / Z-1320) (Anaerocellum thermophilum)).